The primary structure comprises 148 residues: Snaclec 2 (148 aa).

The first 23 residues, 1–23 (MGRFIFVSFGLLVVFLSLSGTEA), serve as a signal peptide directing secretion. Disulfide bonds link Cys-27/Cys-38, Cys-55/Cys-144, and Cys-121/Cys-136. One can recognise a C-type lectin domain in the interval 34 to 145 (YDQNCYKAFE…CSGTHSFVCK (112 aa)).

Belongs to the snaclec family. Heterodimer; disulfide-linked. As to expression, expressed by the venom gland.

It is found in the secreted. Functionally, interferes with one step of hemostasis (modulation of platelet aggregation, or coagulation cascade, for example). This Echis ocellatus (Ocellated saw-scaled viper) protein is Snaclec 2.